A 743-amino-acid polypeptide reads, in one-letter code: Adhesion defective protein 2 (743 aa).

Residues 1–36 (MADPGLRSGVGLPSQQGQKHDLQKDQKQPHVNNADR) are disordered. A compositionally biased stretch (basic and acidic residues) spans 18–28 (QKHDLQKDQKQ). The LisH domain occupies 38–70 (TQSLLNSYIYDYLIKKDYCEAARAFGREAQVQT). Disordered stretches follow at residues 79-127 (NSLA…PPPP), 264-361 (LQSV…QYPV), 379-426 (RNPH…YGFS), and 476-692 (KERK…KSSD). Ser89 is modified (phosphoserine). The segment covering 98 to 114 (ISNNESSDENMNVNNGN) has biased composition (polar residues). Positions 264-281 (LQSVQQQQKQHQQKKTPQ) are enriched in low complexity. 5 stretches are compositionally biased toward polar residues: residues 282-297 (SGST…QPTT), 315-353 (IPSS…DTTG), 390-399 (PSSTLPQQQK), 408-426 (QQPS…YGFS), and 482-500 (TSAS…SSVA). The segment covering 501–520 (KTKSTTPKSTDTPTEATTSP) has biased composition (low complexity). 2 stretches are compositionally biased toward polar residues: residues 521 to 544 (VKVS…NMPM) and 556 to 566 (DHPSNYSNLIE). Low complexity predominate over residues 567 to 578 (NSSTSDTNNADN). Residues 586–602 (WQLQQTHSSRPTPNASS) show a composition bias toward polar residues. The span at 612–631 (PSSANSNAPTPAPTVNTTNP) shows a compositional bias: low complexity. Residues 661–670 (DNQNQSGKSN) are compositionally biased toward polar residues. A compositionally biased stretch (low complexity) spans 671 to 688 (PDTSATPSAPTESTTVAT).

The protein belongs to the FLO8 family.

The protein resides in the cytoplasm. The protein localises to the nucleus. Probable transcriptional regulator involved in cell adhesion. The chain is Adhesion defective protein 2 (adn2) from Schizosaccharomyces pombe (strain 972 / ATCC 24843) (Fission yeast).